Here is a 287-residue protein sequence, read N- to C-terminus: Bifunctional protein FolD (287 aa).

NADP(+) is bound by residues 169-171 (GRS) and Ser-194.

The protein belongs to the tetrahydrofolate dehydrogenase/cyclohydrolase family. In terms of assembly, homodimer.

It catalyses the reaction (6R)-5,10-methylene-5,6,7,8-tetrahydrofolate + NADP(+) = (6R)-5,10-methenyltetrahydrofolate + NADPH. The catalysed reaction is (6R)-5,10-methenyltetrahydrofolate + H2O = (6R)-10-formyltetrahydrofolate + H(+). It participates in one-carbon metabolism; tetrahydrofolate interconversion. Functionally, catalyzes the oxidation of 5,10-methylenetetrahydrofolate to 5,10-methenyltetrahydrofolate and then the hydrolysis of 5,10-methenyltetrahydrofolate to 10-formyltetrahydrofolate. In Albidiferax ferrireducens (strain ATCC BAA-621 / DSM 15236 / T118) (Rhodoferax ferrireducens), this protein is Bifunctional protein FolD.